The chain runs to 300 residues: Bifunctional protein FolD (300 aa).

Residues 168 to 170 (GRS), serine 193, and isoleucine 234 each bind NADP(+).

Belongs to the tetrahydrofolate dehydrogenase/cyclohydrolase family. In terms of assembly, homodimer.

It catalyses the reaction (6R)-5,10-methylene-5,6,7,8-tetrahydrofolate + NADP(+) = (6R)-5,10-methenyltetrahydrofolate + NADPH. The catalysed reaction is (6R)-5,10-methenyltetrahydrofolate + H2O = (6R)-10-formyltetrahydrofolate + H(+). It participates in one-carbon metabolism; tetrahydrofolate interconversion. Catalyzes the oxidation of 5,10-methylenetetrahydrofolate to 5,10-methenyltetrahydrofolate and then the hydrolysis of 5,10-methenyltetrahydrofolate to 10-formyltetrahydrofolate. This is Bifunctional protein FolD from Ehrlichia canis (strain Jake).